The primary structure comprises 150 residues: Large ribosomal subunit protein bL9 (150 aa).

Belongs to the bacterial ribosomal protein bL9 family.

Binds to the 23S rRNA. The chain is Large ribosomal subunit protein bL9 from Lactococcus lactis subsp. cremoris (strain SK11).